The following is a 520-amino-acid chain: Laccase-2 (520 aa).

Residues methionine 1 to alanine 19 form the signal peptide. Plastocyanin-like domains follow at residues threonine 21 to tyrosine 145, valine 157 to alanine 305, and threonine 375 to alanine 488. Cu cation contacts are provided by histidine 82 and histidine 84. Disulfide bonds link cysteine 103–cysteine 509 and cysteine 135–cysteine 229. The N-linked (GlcNAc...) asparagine glycan is linked to asparagine 108. Cu cation-binding residues include histidine 127 and histidine 129. Asparagine 241 and asparagine 299 each carry an N-linked (GlcNAc...) asparagine glycan. Residues histidine 417, histidine 420, histidine 422, histidine 470, cysteine 471, histidine 472, and histidine 476 each coordinate Cu cation. N-linked (GlcNAc...) asparagine glycosylation is present at asparagine 492.

This sequence belongs to the multicopper oxidase family. The cofactor is Cu cation.

It localises to the secreted. It catalyses the reaction 4 hydroquinone + O2 = 4 benzosemiquinone + 2 H2O. Lignin degradation and detoxification of lignin-derived products. The chain is Laccase-2 (lcc2) from Agaricus bisporus (White button mushroom).